A 1004-amino-acid polypeptide reads, in one-letter code: Putative helicase MOV-10 (1004 aa).

Lysine 148 is subject to N6-acetyllysine. The residue at position 254 (threonine 254) is a Phosphothreonine. Residue serine 433 is modified to Phosphoserine. Glycine 525–threonine 532 contacts ATP. The DEAG box signature appears at aspartate 646 to glycine 649. The interval asparagine 922–leucine 966 is interaction with AGO2 and APOBEC3G. Positions leucine 966–leucine 1004 are disordered. Residue serine 970 is modified to Phosphoserine.

It belongs to the DNA2/NAM7 helicase family. SDE3 subfamily. Interacts with DICER1, AGO2, TARBP2, EIF6 and RPL7A (60S ribosome subunit); they form a large RNA-induced silencing complex (RISC). Interacts with APOBEC3G in an RNA-dependent manner. Interacts with TRIM71 (via NHL repeats) in an RNA-dependent manner. Interacts with both protein products of LIRE1, ORF1p and ORF2p. Interacts with TUT4 and, to a lesser extent, TUT7; the interactions are RNA-dependent. Interacts with AGO2, TNRC6B and UPF1; the interactions are direct and RNA-dependent. Interacts with FMR1; this interaction is direct, occurs in an RNA-dependent manner on polysomes and induces association of MOV10 with RNAs. Interacts with SHFL; the interaction increases in presence of RNA. Interacts with DHX34; the interaction is RNA-independent. Interacts with RBM46. Ubiquitinated by the DCX(DCAF12) complex that specifically recognizes the glutamate-leucine (Glu-Leu) degron at the C-terminus, leading to its degradation.

The protein localises to the cytoplasm. The protein resides in the P-body. It is found in the nucleus. Its subcellular location is the cytoplasmic ribonucleoprotein granule. It localises to the stress granule. The catalysed reaction is ATP + H2O = ADP + phosphate + H(+). Its function is as follows. 5' to 3' RNA helicase that is involved in a number of cellular roles ranging from mRNA metabolism and translation, modulation of viral infectivity, inhibition of retrotransposition, or regulation of synaptic transmission. Plays an important role in innate antiviral immunity by promoting type I interferon production. Mechanistically, specifically uses IKKepsilon/IKBKE as the mediator kinase for IRF3 activation. Contributes to UPF1 mRNA target degradation by translocation along 3' UTRs. Required for microRNA (miRNA)-mediated gene silencing by the RNA-induced silencing complex (RISC). Required for both miRNA-mediated translational repression and miRNA-mediated cleavage of complementary mRNAs by RISC. In cooperation with FMR1, regulates miRNA-mediated translational repression by AGO2. Restricts retrotransposition of long interspersed element-1 (LINE-1) in cooperation with TUT4 and TUT7 counteracting the RNA chaperonne activity of L1RE1. Facilitates LINE-1 uridylation by TUT4 and TUT7. Required for embryonic viability and for normal central nervous system development and function. Plays two critical roles in early brain development: suppresses retroelements in the nucleus by directly inhibiting cDNA synthesis, while regulates cytoskeletal mRNAs to influence neurite outgrowth in the cytosol. May function as a messenger ribonucleoprotein (mRNP) clearance factor. This chain is Putative helicase MOV-10 (Mov10), found in Mus musculus (Mouse).